The sequence spans 235 residues: UPF0758 protein Swol_1642 (235 aa).

The MPN domain occupies 109–235 (IIKSPEDVQE…YCSLKARGLI (127 aa)). Residues His-184, His-186, and Asp-197 each contribute to the Zn(2+) site. The JAMM motif signature appears at 184-197 (HNHPSGDPTPSQED).

The protein belongs to the UPF0758 family.

The protein is UPF0758 protein Swol_1642 of Syntrophomonas wolfei subsp. wolfei (strain DSM 2245B / Goettingen).